The following is a 98-amino-acid chain: uncharacterized protein (98 aa).

This sequence belongs to the Rv1128c/1148c/1588c/1702c/1945/3466 family.

This is an uncharacterized protein from Mycobacterium tuberculosis (strain ATCC 25618 / H37Rv).